The sequence spans 442 residues: UDP-glycosyltransferase 79B7 (442 aa).

Residues Ser-260, 319–321, 336–344, and 358–361 each bind UDP-alpha-D-glucose; these read VQQ, HCGPGTIWE, and LSDQ.

Belongs to the UDP-glycosyltransferase family.

The chain is UDP-glycosyltransferase 79B7 (UGT79B7) from Arabidopsis thaliana (Mouse-ear cress).